The primary structure comprises 366 residues: Ribosomal RNA large subunit methyltransferase M (366 aa).

S-adenosyl-L-methionine contacts are provided by residues Ser-188, 221–224 (CPGG), Asp-240, Asp-260, and Asp-277. Lys-306 functions as the Proton acceptor in the catalytic mechanism.

The protein belongs to the class I-like SAM-binding methyltransferase superfamily. RNA methyltransferase RlmE family. RlmM subfamily. Monomer.

Its subcellular location is the cytoplasm. It catalyses the reaction cytidine(2498) in 23S rRNA + S-adenosyl-L-methionine = 2'-O-methylcytidine(2498) in 23S rRNA + S-adenosyl-L-homocysteine + H(+). In terms of biological role, catalyzes the 2'-O-methylation at nucleotide C2498 in 23S rRNA. The protein is Ribosomal RNA large subunit methyltransferase M of Shigella boydii serotype 4 (strain Sb227).